A 107-amino-acid chain; its full sequence is Nucleoid-associated protein PPA0205 (107 aa).

It belongs to the YbaB/EbfC family. As to quaternary structure, homodimer.

The protein localises to the cytoplasm. It is found in the nucleoid. In terms of biological role, binds to DNA and alters its conformation. May be involved in regulation of gene expression, nucleoid organization and DNA protection. This chain is Nucleoid-associated protein PPA0205, found in Cutibacterium acnes (strain DSM 16379 / KPA171202) (Propionibacterium acnes).